The following is a 111-amino-acid chain: Cell cycle protein GpsB (111 aa).

Positions 38-72 (IKDYEAFHKEFEQLKQQNARLKRELEEQKLAATQV) form a coiled coil.

It belongs to the GpsB family. As to quaternary structure, forms polymers through the coiled coil domains. Interacts with PBP1, MreC and EzrA.

It localises to the cytoplasm. In terms of biological role, divisome component that associates with the complex late in its assembly, after the Z-ring is formed, and is dependent on DivIC and PBP2B for its recruitment to the divisome. Together with EzrA, is a key component of the system that regulates PBP1 localization during cell cycle progression. Its main role could be the removal of PBP1 from the cell pole after pole maturation is completed. Also contributes to the recruitment of PBP1 to the division complex. Not essential for septum formation. This chain is Cell cycle protein GpsB, found in Bacillus cereus (strain ATCC 10987 / NRS 248).